A 287-amino-acid chain; its full sequence is Large ribosomal subunit protein uL2 (287 aa).

2 disordered regions span residues 25 to 57 and 203 to 287; these read TKTEPEKSLTTSKHRAKGRNNTGRITSRRRGGG and LSAG…GRES. 2 stretches are compositionally biased toward basic residues: residues 209-220 and 259-287; these read GRNRWKGRRPKV and TRNRKKLSSKFIVRRRRKSSKRGRGGRES.

Belongs to the universal ribosomal protein uL2 family. As to quaternary structure, part of the 50S ribosomal subunit. Forms a bridge to the 30S subunit in the 70S ribosome.

Functionally, one of the primary rRNA binding proteins. Required for association of the 30S and 50S subunits to form the 70S ribosome, for tRNA binding and peptide bond formation. It has been suggested to have peptidyltransferase activity; this is somewhat controversial. Makes several contacts with the 16S rRNA in the 70S ribosome. This is Large ribosomal subunit protein uL2 from Nostoc punctiforme (strain ATCC 29133 / PCC 73102).